The sequence spans 456 residues: Chromosomal replication initiator protein DnaA (456 aa).

Residues 1–85 (MDADLNKLWE…EIKFIIESDL (85 aa)) are domain I, interacts with DnaA modulators. Residues 85 to 117 (LNNEDELNNSDNSDKNRDKNSRRNIVVNDEMSS) are domain II. A domain III, AAA+ region region spans residues 118–334 (TLNPKYTFNS…GALIRIIAYS (217 aa)). ATP is bound by residues G162, G164, K165, and T166. The tract at residues 335 to 456 (SLTNREVTVD…SDITKKVSQN (122 aa)) is domain IV, binds dsDNA.

This sequence belongs to the DnaA family. Oligomerizes as a right-handed, spiral filament on DNA at oriC.

It is found in the cytoplasm. Plays an essential role in the initiation and regulation of chromosomal replication. ATP-DnaA binds to the origin of replication (oriC) to initiate formation of the DNA replication initiation complex once per cell cycle. Binds the DnaA box (a 9 base pair repeat at the origin) and separates the double-stranded (ds)DNA. Forms a right-handed helical filament on oriC DNA; dsDNA binds to the exterior of the filament while single-stranded (ss)DNA is stabiized in the filament's interior. The ATP-DnaA-oriC complex binds and stabilizes one strand of the AT-rich DNA unwinding element (DUE), permitting loading of DNA polymerase. After initiation quickly degrades to an ADP-DnaA complex that is not apt for DNA replication. Binds acidic phospholipids. This Clostridium botulinum (strain Eklund 17B / Type B) protein is Chromosomal replication initiator protein DnaA.